Reading from the N-terminus, the 432-residue chain is Glutamate-1-semialdehyde 2,1-aminomutase (432 aa).

Lysine 272 carries the post-translational modification N6-(pyridoxal phosphate)lysine.

It belongs to the class-III pyridoxal-phosphate-dependent aminotransferase family. HemL subfamily. As to quaternary structure, homodimer. The cofactor is pyridoxal 5'-phosphate.

The protein resides in the cytoplasm. The catalysed reaction is (S)-4-amino-5-oxopentanoate = 5-aminolevulinate. Its pathway is porphyrin-containing compound metabolism; protoporphyrin-IX biosynthesis; 5-aminolevulinate from L-glutamyl-tRNA(Glu): step 2/2. The protein operates within porphyrin-containing compound metabolism; chlorophyll biosynthesis. This is Glutamate-1-semialdehyde 2,1-aminomutase from Cyanothece sp. (strain PCC 7425 / ATCC 29141).